The following is a 458-amino-acid chain: O-acyltransferase WSD (458 aa).

Catalysis depends on His133, which acts as the Proton acceptor.

The protein belongs to the long-chain O-acyltransferase family.

It carries out the reaction a long chain fatty alcohol + a fatty acyl-CoA = a wax ester + CoA. The enzyme catalyses an acyl-CoA + a 1,2-diacyl-sn-glycerol = a triacyl-sn-glycerol + CoA. It participates in glycerolipid metabolism; triacylglycerol biosynthesis. In terms of biological role, bifunctional wax ester synthase/diacylglycerol acyltransferase (WS and DGAT). Catalyzes the terminal and only committed step in triacylglycerol synthesis by using diacylglycerol and fatty acyl CoA as substrates. Required for storage lipid synthesis. WS uses C(12)-CoA to C(18)-CoA substrates whereas DGAT prefers C(20)-CoA. Upon expression in E.coli and Pseudomonas citronellolis (DSM 50332) both WS and DGAT activities increase. In Acinetobacter baylyi (strain ATCC 33305 / BD413 / ADP1), this protein is O-acyltransferase WSD (wax-dgaT).